The chain runs to 493 residues: Cobyric acid synthase (493 aa).

Residues 260-427 (RLSVAAIRLP…RHGYLQDDPA (168 aa)) form the GATase cobBQ-type domain. H419 is an active-site residue.

Belongs to the CobB/CobQ family. CobQ subfamily.

The protein operates within cofactor biosynthesis; adenosylcobalamin biosynthesis. In terms of biological role, catalyzes amidations at positions B, D, E, and G on adenosylcobyrinic A,C-diamide. NH(2) groups are provided by glutamine, and one molecule of ATP is hydrogenolyzed for each amidation. This chain is Cobyric acid synthase, found in Corynebacterium efficiens (strain DSM 44549 / YS-314 / AJ 12310 / JCM 11189 / NBRC 100395).